Consider the following 138-residue polypeptide: ATP synthase epsilon chain, chloroplastic (138 aa).

Belongs to the ATPase epsilon chain family. In terms of assembly, F-type ATPases have 2 components, CF(1) - the catalytic core - and CF(0) - the membrane proton channel. CF(1) has five subunits: alpha(3), beta(3), gamma(1), delta(1), epsilon(1). CF(0) has three main subunits: a, b and c.

Its subcellular location is the plastid. It is found in the chloroplast thylakoid membrane. In terms of biological role, produces ATP from ADP in the presence of a proton gradient across the membrane. This chain is ATP synthase epsilon chain, chloroplastic, found in Staurastrum punctulatum (Green alga).